The primary structure comprises 167 residues: Telethonin (167 aa).

Position 39 is a phosphoserine (S39). The interval 144-167 (VPVSKPGALRRSLSRSMSQEAQRG) is disordered. The segment covering 157 to 167 (SRSMSQEAQRG) has biased composition (polar residues).

Interacts with MYOZ1, MYOZ2 and MYOZ3. Interacts with CSRP3. Interacts directly with the N-terminal Ig-like domains of 2 titin (TTN) molecules. Interacts with ANKRD2; the interaction is direct. In terms of tissue distribution, heart and skeletal muscle.

The protein resides in the cytoplasm. Its subcellular location is the myofibril. The protein localises to the sarcomere. Its function is as follows. Muscle assembly regulating factor. Mediates the antiparallel assembly of titin (TTN) molecules at the sarcomeric Z-disk. This is Telethonin (TCAP) from Homo sapiens (Human).